Reading from the N-terminus, the 415-residue chain is MVFAHRMDNDQPPVVTATLLVPLQNSSCAEAAEALLPHGLMGLHEEHSWMSNRTELQYELNPGEVATASIFFGALWLFSIFGNSLVCLVIHRSRRTQSTTNYFVVSMACADLLISVASTPFVVLQFTTGRWTLGSAMCKVVRYFQYLTPGVQIYVLLSICIDRFYTIVYPLSFKVSREKAKKMIAASWILDAAFVTPVFFFYGSNWDSHCNYFLPPSWEGTAYTVIHFLVGFVIPSILIILFYQKVIKYIWRIGTDGRTLRRTMNIVPRTKVKTVKMFLLLNLVFLFSWLPFHVAQLWHPHEQDYKKSSLVFTAVTWVSFSSSASKPTLYSIYNANFRRGMKETFCMSSMKCYRSNAYTITTSSRMAKRNYVGISEIPPVSRTITKDSIYDSFDREAREKKLAWPINSNPPNTFV.

The Extracellular portion of the chain corresponds to Met-1 to Ser-69. Asn-25 and Asn-52 each carry an N-linked (GlcNAc...) asparagine glycan. Residues Ile-70–Ile-90 traverse the membrane as a helical segment. Residues His-91–Tyr-102 are Cytoplasmic-facing. A helical membrane pass occupies residues Phe-103–Val-123. Topologically, residues Leu-124–Gln-152 are extracellular. Cys-138 and Cys-210 are joined by a disulfide. Residues Ile-153–Phe-173 form a helical membrane-spanning segment. Residues Lys-174–Lys-182 are Cytoplasmic-facing. A helical membrane pass occupies residues Met-183–Gly-203. Topologically, residues Ser-204–Thr-221 are extracellular. The helical transmembrane segment at Ala-222 to Phe-242 threads the bilayer. The Cytoplasmic portion of the chain corresponds to Tyr-243–Met-277. A helical transmembrane segment spans residues Phe-278–Trp-298. Topologically, residues His-299–Ser-309 are extracellular. A helical membrane pass occupies residues Leu-310–Ile-332. Over Tyr-333–Val-415 the chain is Cytoplasmic.

It belongs to the G-protein coupled receptor 1 family. Strongly expressed in the brain.

The protein resides in the cell membrane. Functionally, G-protein coupled receptor that plays a role in the regulation of circadian rhythms and energy metabolism. Participates in maintaining proper circadian gene expression in the suprachiasmatic nucleus (SCN), the locus of the master circadian clock in the brain. May function as a coordinator of aging-associated metabolic dysfunction, stress response, DNA integrity management, and eventual senescence. Upon binding to adropin, modulates mitochondrial energy metabolism via the p44/42-PDK4 signaling pathway, influencing pyruvate dehydrogenase activity. The protein is Probable G-protein coupled receptor 19 (Gpr19) of Mus musculus (Mouse).